The chain runs to 130 residues: Small ribosomal subunit protein uS9 (130 aa).

Belongs to the universal ribosomal protein uS9 family.

The sequence is that of Small ribosomal subunit protein uS9 from Pseudomonas syringae pv. tomato (strain ATCC BAA-871 / DC3000).